The primary structure comprises 346 residues: Leucine zipper protein 2 (346 aa).

An N-terminal signal peptide occupies residues 1–19 (MKFSPAHYLLPLLPALVLS). Positions 16 to 211 (LVLSTRQDYE…QMKAMKETVQ (196 aa)) form a coiled coil. Asn133 carries N-linked (GlcNAc...) asparagine glycosylation. Positions 164 to 192 (LRYGKKDLLFKAQQLTDLEQKLAVAKNEL) are leucine-zipper. Disordered regions lie at residues 221–240 (QPPP…LLPP) and 248–346 (PDAA…EKIL). A compositionally biased stretch (low complexity) spans 250-261 (AAAKSKPQQSAS). Residues 262-283 (GNNESSQVESTKEGNPSTTACD) show a composition bias toward polar residues. N-linked (GlcNAc...) asparagine glycosylation is present at Asn264. Positions 286–298 (DEGRPCSMKHKES) are enriched in basic and acidic residues. N-linked (GlcNAc...) asparagine glycosylation occurs at Asn302.

The protein localises to the secreted. This Homo sapiens (Human) protein is Leucine zipper protein 2 (LUZP2).